The sequence spans 124 residues: Conotoxin Im14.2 (124 aa).

The signal sequence occupies residues 1–20; that stretch reads MARFLSILLCFAMATGLAAG. The propeptide occupies 21–99; the sequence is IRYPDRVLGR…AENPVRDPKK (79 aa).

Post-translationally, contain 2 disulfide bonds. In terms of tissue distribution, expressed by the venom duct.

It is found in the secreted. Its function is as follows. Probable neurotoxin. In Conus imperialis (Imperial cone), this protein is Conotoxin Im14.2.